Here is a 384-residue protein sequence, read N- to C-terminus: Probable fructokinase-6, chloroplastic (384 aa).

The N-terminal 46 residues, 1 to 46 (MALQATTTTFCFSGPTFRSTPHSLTSKRPISIKATTSSPSRLSNSR), are a transit peptide targeting the chloroplast. The interval 34–61 (ATTSSPSRLSNSRSNLKGRALSSDGSTQ) is disordered. Over residues 35-48 (TTSSPSRLSNSRSN) the composition is skewed to low complexity.

Belongs to the carbohydrate kinase PfkB family.

The protein resides in the plastid. It localises to the chloroplast. The catalysed reaction is D-fructose + ATP = D-fructose 6-phosphate + ADP + H(+). Its pathway is glycan biosynthesis; starch biosynthesis. Its function is as follows. May play an important role in maintaining the flux of carbon towards starch formation. The chain is Probable fructokinase-6, chloroplastic from Arabidopsis thaliana (Mouse-ear cress).